The primary structure comprises 211 residues: Claudin-7 (211 aa).

Residues M1–Q7 lie on the Cytoplasmic side of the membrane. Residues L8–P28 traverse the membrane as a helical segment. Residues Q29–R81 are Extracellular-facing. The chain crosses the membrane as a helical span at residues A82–M102. Over K103–R117 the chain is Cytoplasmic. A helical transmembrane segment spans residues I118 to S138. At W139–E160 the chain is on the extracellular side. A helical transmembrane segment spans residues F161–L181. Topologically, residues L182–V211 are cytoplasmic. The interval Y210 to V211 is interactions with TJP1, TJP2 and TJP3.

This sequence belongs to the claudin family. In terms of assembly, directly interacts with TJP1/ZO-1, TJP2/ZO-2 and TJP3/ZO-3. The phosphorylated form interacts with EPCAM. Does not interact with CD81. Phosphorylated. In terms of tissue distribution, expressed in kidney, lung and prostate. Isoform 1 seems to be predominant, except in some normal prostate samples, where isoform 2 is the major form. Down-regulated in breast cancers, including ductal carcinoma in situ (DCIS), lobular carcinoma in situ (LCIS) and invasive ductal carcinoma (IDC) (at protein level), as well as in several cancer cell lines. Loss of expression correlates with histological grade, occurring predominantly in high-grade lesions.

The protein resides in the cell membrane. It localises to the basolateral cell membrane. Its subcellular location is the cell junction. The protein localises to the tight junction. Its function is as follows. Plays a major role in tight junction-specific obliteration of the intercellular space. This chain is Claudin-7 (CLDN7), found in Homo sapiens (Human).